A 120-amino-acid chain; its full sequence is Meiosis expressed gene 1 protein homolog (120 aa).

Residues 1–45 (MDGLAIGGVSAPMTAERPQQVKKQLSRRTPDAADGRKPTRMERAK) are disordered. Positions 28-45 (RTPDAADGRKPTRMERAK) are enriched in basic and acidic residues.

Belongs to the MEIG1 family.

The chain is Meiosis expressed gene 1 protein homolog from Oxyrrhis marina (Dinoflagellate).